Here is a 150-residue protein sequence, read N- to C-terminus: Con-Ins Im1 (150 aa).

The first 25 residues, 1 to 25 (MATSLLSPLLVAMLGFLLHVHVARA), serve as a signal peptide directing secretion. Intrachain disulfides connect cysteine 31-cysteine 133, cysteine 46-cysteine 136, cysteine 58-cysteine 149, and cysteine 135-cysteine 140. The propeptide at 64–111 (GYAGGQRQLRKRTSMIDSDDMEAEGGSRGGFLMSKRRALSYLQKETNP) is c peptide. Glutamate 144 is modified (4-carboxyglutamate; partial).

It belongs to the insulin family. Heterodimer of A and B chains; disulfide-linked. As to expression, expressed by the venom gland.

The protein resides in the secreted. Its function is as follows. This venom insulin facilitates prey capture by rapidly inducing hypoglycemic shock. Intraperitoneal injection of this peptide into zebrafish lowers blood glucose with the same potency than human insulin. In vivo, when applied to water, this peptide reduces overall locomotor activity of zebrafish larvae, observed as a significant decrease in the percentage of time spent swimming and movement frequency. The sequence is that of Con-Ins Im1 from Conus imperialis (Imperial cone).